The sequence spans 422 residues: Enolase (422 aa).

Glutamine 161 contributes to the (2R)-2-phosphoglycerate binding site. The active-site Proton donor is glutamate 203. Mg(2+) is bound by residues aspartate 240, glutamate 283, and aspartate 310. 4 residues coordinate (2R)-2-phosphoglycerate: lysine 335, arginine 364, serine 365, and lysine 386. Lysine 335 functions as the Proton acceptor in the catalytic mechanism.

Belongs to the enolase family. Mg(2+) serves as cofactor.

The protein localises to the cytoplasm. The protein resides in the secreted. It localises to the cell surface. It carries out the reaction (2R)-2-phosphoglycerate = phosphoenolpyruvate + H2O. Its pathway is carbohydrate degradation; glycolysis; pyruvate from D-glyceraldehyde 3-phosphate: step 4/5. Its function is as follows. Catalyzes the reversible conversion of 2-phosphoglycerate (2-PG) into phosphoenolpyruvate (PEP). It is essential for the degradation of carbohydrates via glycolysis. In Deinococcus radiodurans (strain ATCC 13939 / DSM 20539 / JCM 16871 / CCUG 27074 / LMG 4051 / NBRC 15346 / NCIMB 9279 / VKM B-1422 / R1), this protein is Enolase.